Reading from the N-terminus, the 51-residue chain is Large ribosomal subunit protein bL33 (51 aa).

Belongs to the bacterial ribosomal protein bL33 family.

This chain is Large ribosomal subunit protein bL33, found in Nitrosococcus oceani (strain ATCC 19707 / BCRC 17464 / JCM 30415 / NCIMB 11848 / C-107).